The chain runs to 192 residues: uncharacterized protein (192 aa).

In terms of domain architecture, Nudix hydrolase spans His29–Ser160. Residues Gly67–Ala89 carry the Nudix box motif. Residues Glu83 and Glu87 each coordinate Mg(2+).

The protein belongs to the Nudix hydrolase family. PCD1 subfamily. The cofactor is Mn(2+). Mg(2+) serves as cofactor.

Functionally, probably mediates the hydrolysis of some nucleoside diphosphate derivatives. This is an uncharacterized protein from Escherichia coli O139:H28 (strain E24377A / ETEC).